The chain runs to 149 residues: General odorant-binding protein 99b (149 aa).

Positions 1-16 are cleaved as a signal peptide; that stretch reads MKVLIVLLLGLAFVLA. 3 disulfides stabilise this stretch: Cys-40-Cys-71, Cys-67-Cys-125, and Cys-114-Cys-134.

The protein belongs to the PBP/GOBP family. In terms of tissue distribution, expressed in adult olfactory system. Expressed in subsets of sensilla in both olfactory organs, the maxillary palps, and third antennal segments.

The protein localises to the secreted. Its function is as follows. Present in the aqueous fluid surrounding olfactory sensory dendrites and are thought to aid in the capture and transport of hydrophobic odorants into and through this fluid. In Drosophila melanogaster (Fruit fly), this protein is General odorant-binding protein 99b (Obp99b).